Consider the following 236-residue polypeptide: Pyridoxine 5'-phosphate synthase (236 aa).

N6 is a 3-amino-2-oxopropyl phosphate binding site. 8-9 (DH) contributes to the 1-deoxy-D-xylulose 5-phosphate binding site. R17 contributes to the 3-amino-2-oxopropyl phosphate binding site. H42 functions as the Proton acceptor in the catalytic mechanism. Positions 44 and 49 each coordinate 1-deoxy-D-xylulose 5-phosphate. E69 acts as the Proton acceptor in catalysis. T99 is a binding site for 1-deoxy-D-xylulose 5-phosphate. The active-site Proton donor is H190. Residues G191 and 212–213 (GH) contribute to the 3-amino-2-oxopropyl phosphate site.

This sequence belongs to the PNP synthase family. Homooctamer; tetramer of dimers.

The protein localises to the cytoplasm. It catalyses the reaction 3-amino-2-oxopropyl phosphate + 1-deoxy-D-xylulose 5-phosphate = pyridoxine 5'-phosphate + phosphate + 2 H2O + H(+). It functions in the pathway cofactor biosynthesis; pyridoxine 5'-phosphate biosynthesis; pyridoxine 5'-phosphate from D-erythrose 4-phosphate: step 5/5. Catalyzes the complicated ring closure reaction between the two acyclic compounds 1-deoxy-D-xylulose-5-phosphate (DXP) and 3-amino-2-oxopropyl phosphate (1-amino-acetone-3-phosphate or AAP) to form pyridoxine 5'-phosphate (PNP) and inorganic phosphate. In Chloroherpeton thalassium (strain ATCC 35110 / GB-78), this protein is Pyridoxine 5'-phosphate synthase.